Reading from the N-terminus, the 102-residue chain is UPF0045 protein Mb1933 (102 aa).

The protein belongs to the UPF0045 family.

This Mycobacterium bovis (strain ATCC BAA-935 / AF2122/97) protein is UPF0045 protein Mb1933.